A 181-amino-acid chain; its full sequence is Inner membrane-spanning protein YciB (181 aa).

A run of 5 helical transmembrane segments spans residues phenylalanine 8–alanine 28, isoleucine 53–phenylalanine 73, tryptophan 76–glycine 96, leucine 121–phenylalanine 141, and phenylalanine 149–isoleucine 169.

The protein belongs to the YciB family.

It is found in the cell inner membrane. In terms of biological role, plays a role in cell envelope biogenesis, maintenance of cell envelope integrity and membrane homeostasis. The sequence is that of Inner membrane-spanning protein YciB from Coxiella burnetii (strain RSA 331 / Henzerling II).